The chain runs to 291 residues: Asialoglycoprotein receptor 1 (291 aa).

Residues 1–19 are compositionally biased toward basic and acidic residues; sequence MTKECQDLQHLDNEESDHH. The tract at residues 1–27 is disordered; the sequence is MTKECQDLQHLDNEESDHHQLRKGPPP. Over 1-40 the chain is Cytoplasmic; sequence MTKECQDLQHLDNEESDHHQLRKGPPPSQPLLQRLCSGPR. The Endocytosis signal motif lies at 5–8; sequence CQDL. Position 16 is a phosphoserine (S16). The S-palmitoyl cysteine moiety is linked to residue C36. Residues 41 to 61 form a helical; Signal-anchor for type II membrane protein membrane-spanning segment; that stretch reads LLLLSLGLSLLLLVVVCVIGS. Positions 61-123 form a coiled coil; it reads SQNSQLQKEL…KDLSEDHSSL (63 aa). The Extracellular portion of the chain corresponds to 62–291; the sequence is QNSQLQKELR…DKASQEPPLL (230 aa). N-linked (GlcNAc...) asparagine glycosylation is found at N79 and N147. 3 disulfide bridges follow: C154/C165, C182/C277, and C255/C269. Positions 161–278 constitute a C-type lectin domain; the sequence is HERSCYWFSR…CQRPYRWVCE (118 aa). Ca(2+) is bound by residues V191, E197, D216, Q240, D242, D243, E253, D254, N265, D266, and E278. S285 is subject to Phosphoserine.

Interacts with LASS2. In terms of processing, phosphorylated on a cytoplasmic Ser residue.

It localises to the membrane. Its function is as follows. Mediates the endocytosis of plasma glycoproteins to which the terminal sialic acid residue on their complex carbohydrate moieties has been removed. The receptor recognizes terminal galactose and N-acetylgalactosamine units. After ligand binding to the receptor, the resulting complex is internalized and transported to a sorting organelle, where receptor and ligand are disassociated. The receptor then returns to the cell membrane surface. This Pongo abelii (Sumatran orangutan) protein is Asialoglycoprotein receptor 1 (ASGR1).